Reading from the N-terminus, the 97-residue chain is Large ribosomal subunit protein uL23 (97 aa).

This sequence belongs to the universal ribosomal protein uL23 family. In terms of assembly, part of the 50S ribosomal subunit. Contacts protein L29, and trigger factor when it is bound to the ribosome.

Functionally, one of the early assembly proteins it binds 23S rRNA. One of the proteins that surrounds the polypeptide exit tunnel on the outside of the ribosome. Forms the main docking site for trigger factor binding to the ribosome. The sequence is that of Large ribosomal subunit protein uL23 from Lactiplantibacillus plantarum (strain ATCC BAA-793 / NCIMB 8826 / WCFS1) (Lactobacillus plantarum).